The primary structure comprises 610 residues: Elongation factor 4 (610 aa).

One can recognise a tr-type G domain in the interval 11 to 193 (ENIRNFSIIA…QIVEKVPAPS (183 aa)). Residues 23-28 (DHGKST) and 140-143 (NKID) contribute to the GTP site.

The protein belongs to the TRAFAC class translation factor GTPase superfamily. Classic translation factor GTPase family. LepA subfamily.

It is found in the cell membrane. The enzyme catalyses GTP + H2O = GDP + phosphate + H(+). In terms of biological role, required for accurate and efficient protein synthesis under certain stress conditions. May act as a fidelity factor of the translation reaction, by catalyzing a one-codon backward translocation of tRNAs on improperly translocated ribosomes. Back-translocation proceeds from a post-translocation (POST) complex to a pre-translocation (PRE) complex, thus giving elongation factor G a second chance to translocate the tRNAs correctly. Binds to ribosomes in a GTP-dependent manner. The protein is Elongation factor 4 of Streptococcus equi subsp. zooepidemicus (strain H70).